Here is a 293-residue protein sequence, read N- to C-terminus: Elongation factor Ts (293 aa).

Positions 80–83 (TDFV) are involved in Mg(2+) ion dislocation from EF-Tu.

The protein belongs to the EF-Ts family.

It is found in the cytoplasm. Associates with the EF-Tu.GDP complex and induces the exchange of GDP to GTP. It remains bound to the aminoacyl-tRNA.EF-Tu.GTP complex up to the GTP hydrolysis stage on the ribosome. The sequence is that of Elongation factor Ts from Paraburkholderia xenovorans (strain LB400).